The chain runs to 116 residues: Cysteine proteinase inhibitor 1 (116 aa).

The N-terminal stretch at 1–26 (MVPKPLSLLLFLLLALSAAVVGGRKL) is a signal peptide. The region spanning 30–89 (GGWRPIESLNSAEVQDVAQFAVSEHNKQANDELQYQSVVRGYTQVVAGTNYRLVIAAKDG) is the Cystatin domain. A Secondary area of contact motif is present at residues 73–77 (QVVAG). Asparagine 109 is a glycosylation site (N-linked (GlcNAc...) asparagine).

Belongs to the cystatin family. Phytocystatin subfamily. Glycosylated.

It is found in the secreted. In terms of biological role, specific inhibitor of papain family cysteine proteinases. Inhibits papain, chymopapain, bromelain, ficin, human cathepsins B, H and L, actinidain and house dustmite endopeptidase 1, but does not inhibit human bleomycin hydrolase. Inhibits papain with an IC(50) of 2.47 nM. Does not inhibit cysteine proteinases belonging to other families including clostripain, streptopain and calpain. The polypeptide is Cysteine proteinase inhibitor 1 (Actinidia deliciosa (Kiwi)).